A 212-amino-acid chain; its full sequence is uncharacterized protein (212 aa).

Residues 1–18 form the signal peptide; sequence MQLTQVLAVAILAAGVSA. Residues 108–180 form a disordered region; sequence VSHNRVNAKQ…KDYGHKDYGH (73 aa). Positions 117-180 are enriched in basic and acidic residues; the sequence is QRRDDKKDYG…KDYGHKDYGH (64 aa). The segment at 120 to 210 is 15 X 5 AA tandem repeats of K-D-Y-G-H; that stretch reads DDKKDYGKND…KDYGYKGYDD (91 aa). Repeat 1 spans residues 123–127; the sequence is KDYGK. One copy of the 2; truncated repeat lies at 128–132; that stretch reads NDYGK. 3 repeat units span residues 133-137, 138-142, and 143-147. The 6; truncated repeat unit spans residues 148 to 152; it reads KEYDP. 5 tandem repeats follow at residues 166–170, 171–175, 176–180, 181–185, and 186–190. One copy of the 12; truncated repeat lies at 191–195; the sequence is DDYGY. A 13; truncated repeat occupies 196-200; sequence KGYDD. A 14; truncated repeat occupies 201 to 205; that stretch reads KDYGY. The 15; truncated repeat unit spans residues 206-210; sequence KGYDD.

Its subcellular location is the secreted. This is an uncharacterized protein from Arthroderma benhamiae (strain ATCC MYA-4681 / CBS 112371) (Trichophyton mentagrophytes).